Consider the following 779-residue polypeptide: Kazrin (779 aa).

Positions 79-261 (AQVLLREEVV…LATLTKDVPK (183 aa)) form a coiled coil. The disordered stretch occupies residues 295-366 (QQTLYHSHPP…PGPVQKSLHN (72 aa)). Phosphoserine is present on residues serine 356, serine 371, and serine 391. The tract at residues 403 to 429 (KSLDPGLFDDSDSQCSPTRHSLSLSEG) is disordered. The segment covering 415–426 (SQCSPTRHSLSL) has biased composition (polar residues). SAM domains lie at 450–515 (WKAG…YRDA), 528–592 (DHHW…LYQV), and 616–683 (WTNQ…STIF). A disordered region spans residues 685 to 779 (PSNSTGIRES…GYGSLEVTNV (95 aa)). A compositionally biased stretch (basic and acidic residues) spans 736 to 746 (SSKEPDFHDDY).

Belongs to the kazrin family. As to expression, expressed in skin interfollicular epidermis and hair follicles. Expressed in tongue epithelium basal suprabasal layers.

The protein localises to the cell junction. Its subcellular location is the nucleus. The protein resides in the cytoplasm. It is found in the cytoskeleton. Component of the cornified envelope of keratinocytes. May be involved in the interplay between adherens junctions and desmosomes. The function in the nucleus is not known. The protein is Kazrin (Kazn) of Mus musculus (Mouse).